Reading from the N-terminus, the 262-residue chain is Small ribosomal subunit protein mS23 (262 aa).

Residues Ala242–Ala254 are compositionally biased toward acidic residues. Residues Ala242–Ala262 form a disordered region.

The protein belongs to the mitochondrion-specific ribosomal protein mS23 family. Component of the mitochondrial small ribosomal subunit.

Its subcellular location is the mitochondrion. The sequence is that of Small ribosomal subunit protein mS23 (rsm25) from Aspergillus niger (strain ATCC MYA-4892 / CBS 513.88 / FGSC A1513).